A 3587-amino-acid polypeptide reads, in one-letter code: Tyrocidine synthase 2 (3587 aa).

The tract at residues 466–1045 (AATMHELFSR…IQALAAYVEG (580 aa)) is domain 1 (Proline-activating). 2 Carrier domains span residues 972-1047 (APTT…EGGE) and 2007-2082 (APAT…EHSE). 2 positions are modified to O-(pantetheine 4'-phosphoryl)serine: Ser-1007 and Ser-2042. Positions 1522 to 2081 (EQTAVVFGDK…RDLARLIEHS (560 aa)) are domain 2 (Phenylalanine-activating). The interval 2540–3122 (YRADQTIQQL…NSRESEQGVV (583 aa)) is domain 3 (D-phenylalanine-activating). The segment at 3017–3040 (NDKIDRKALPKPNQEENRTEQYAA) is disordered. Positions 3018–3035 (DKIDRKALPKPNQEENRT) are enriched in basic and acidic residues. One can recognise a Carrier 3 domain in the interval 3040–3114 (APQTELEQLL…EAALRVIPNS (75 aa)). Position 3075 is an O-(pantetheine 4'-phosphoryl)serine (Ser-3075).

The protein belongs to the ATP-dependent AMP-binding enzyme family. As to quaternary structure, large multienzyme complex of TycA, TycB and TycC. It depends on pantetheine 4'-phosphate as a cofactor.

The catalysed reaction is L-phenylalanine + ATP + H2O = D-phenylalanine + AMP + diphosphate + H(+). It participates in antibiotic biosynthesis; tyrocidine biosynthesis. In terms of biological role, activates the second to fourth amino acids in tyrocidine (in tyrocidine A, Pro, Phe, and D-Phe) and epimerizes the last one. The sequence is that of Tyrocidine synthase 2 (tycB) from Brevibacillus parabrevis.